Here is a 104-residue protein sequence, read N- to C-terminus: Large ribosomal subunit protein uL15z (104 aa).

The protein belongs to the universal ribosomal protein uL15 family.

The sequence is that of Large ribosomal subunit protein uL15z (RPL27AA) from Arabidopsis thaliana (Mouse-ear cress).